We begin with the raw amino-acid sequence, 234 residues long: MKLTPKELDKLMLHYAGELAKQRKAKGIKLNYTEAVALISAHVMEEARAGKKSVADLMQEGRTLLKADDVMPGVAHMIHEVGIEAGFPDGTKLVTIHTPVEAGSDKLAPGEVILKNEDITLNAGKHAVQLKVKNKGDRPVQVGSHFHFFEVNKLLDFDREKAYGKRLDIASGTAVRFEPGEEKTVELIDIGGNKRIYGFNALVDRQADHDGKKLALKRAKEKHFGTINCGCDNK.

A urease gamma region spans residues 1-102 (MKLTPKELDK…LVTIHTPVEA (102 aa)). The tract at residues 103–234 (GSDKLAPGEV…GTINCGCDNK (132 aa)) is urease beta.

In the N-terminal section; belongs to the urease gamma subunit family. This sequence in the C-terminal section; belongs to the urease beta subunit family. In terms of assembly, heterohexamer of 3 UreA (alpha) and 3 UreB (beta) subunits.

The protein localises to the cytoplasm. It carries out the reaction urea + 2 H2O + H(+) = hydrogencarbonate + 2 NH4(+). The protein operates within nitrogen metabolism; urea degradation; CO(2) and NH(3) from urea (urease route): step 1/1. This is Urease subunit alpha from Helicobacter heilmannii.